Reading from the N-terminus, the 312-residue chain is Acetaldehyde dehydrogenase (312 aa).

11–14 (SGNI) is a binding site for NAD(+). Catalysis depends on Cys-129, which acts as the Acyl-thioester intermediate. NAD(+) contacts are provided by residues 160 to 168 (SAGPGTRAN) and Asn-287.

It belongs to the acetaldehyde dehydrogenase family.

It catalyses the reaction acetaldehyde + NAD(+) + CoA = acetyl-CoA + NADH + H(+). The chain is Acetaldehyde dehydrogenase (xylQ) from Sphingobium yanoikuyae (Sphingomonas yanoikuyae).